Reading from the N-terminus, the 446-residue chain is tRNA modification GTPase MnmE (446 aa).

(6S)-5-formyl-5,6,7,8-tetrahydrofolate contacts are provided by R24, E81, and K120. In terms of domain architecture, TrmE-type G spans 216–368 (GLHAVLIGPP…LHIRLRELAL (153 aa)). Position 226 (N226) interacts with K(+). GTP contacts are provided by residues 226 to 231 (NAGKSS), 245 to 251 (TDVAGTT), and 270 to 273 (DTAG). S230 is a binding site for Mg(2+). Residues T245, V247, and T250 each contribute to the K(+) site. T251 lines the Mg(2+) pocket. K446 contacts (6S)-5-formyl-5,6,7,8-tetrahydrofolate.

The protein belongs to the TRAFAC class TrmE-Era-EngA-EngB-Septin-like GTPase superfamily. TrmE GTPase family. As to quaternary structure, homodimer. Heterotetramer of two MnmE and two MnmG subunits. Requires K(+) as cofactor.

Its subcellular location is the cytoplasm. Its function is as follows. Exhibits a very high intrinsic GTPase hydrolysis rate. Involved in the addition of a carboxymethylaminomethyl (cmnm) group at the wobble position (U34) of certain tRNAs, forming tRNA-cmnm(5)s(2)U34. The polypeptide is tRNA modification GTPase MnmE (Xanthomonas oryzae pv. oryzae (strain MAFF 311018)).